Here is a 264-residue protein sequence, read N- to C-terminus: MSNSNIHTTAIIAEGAKFGKNVKVGPYCIIGPEVVLHDNVELKSHVVIDGITEIGENTVIYPFASIGQPPQILKYANERSSTIIGSNNTIREYVTVQAGSKSGGMITRVGNNNLFMVGVHIGHDCKIGNNLVFANYVSLAGHIKVGDYAIIGGLSAVHQYTRIGEYSMIGGLSPVSADVIPFGLVSSKRAVLEGLNLIGMNRKGFDKVDSLTALNAVEEIFLGKGNFADRIKQVAEKYKNNSIVTQIIDFLNQDSSRSFCHFKK.

It belongs to the transferase hexapeptide repeat family. LpxA subfamily. In terms of assembly, homotrimer.

Its subcellular location is the cytoplasm. It carries out the reaction a (3R)-hydroxyacyl-[ACP] + UDP-N-acetyl-alpha-D-glucosamine = a UDP-3-O-[(3R)-3-hydroxyacyl]-N-acetyl-alpha-D-glucosamine + holo-[ACP]. Its pathway is glycolipid biosynthesis; lipid IV(A) biosynthesis; lipid IV(A) from (3R)-3-hydroxytetradecanoyl-[acyl-carrier-protein] and UDP-N-acetyl-alpha-D-glucosamine: step 1/6. In terms of biological role, involved in the biosynthesis of lipid A, a phosphorylated glycolipid that anchors the lipopolysaccharide to the outer membrane of the cell. The polypeptide is Acyl-[acyl-carrier-protein]--UDP-N-acetylglucosamine O-acyltransferase (Rickettsia typhi (strain ATCC VR-144 / Wilmington)).